The chain runs to 74 residues: ATP synthase subunit 9, mitochondrial (74 aa).

The next 2 membrane-spanning stretches (helical) occupy residues 8–28 (MGAGAATIALAGAAIGIGNVF) and 50–70 (ILGFALTEAIALFALMMAFLI).

Belongs to the ATPase C chain family. As to quaternary structure, F-type ATPases have 2 components, CF(1) - the catalytic core - and CF(0) - the membrane proton channel. CF(1) has five subunits: alpha(3), beta(3), gamma(1), delta(1), epsilon(1). CF(0) has three main subunits: a, b and c.

The protein resides in the mitochondrion membrane. Its function is as follows. This protein is one of the chains of the nonenzymatic membrane component (F0) of mitochondrial ATPase. The sequence is that of ATP synthase subunit 9, mitochondrial (ATP9) from Solanum tuberosum (Potato).